Reading from the N-terminus, the 74-residue chain is MKKNTPKSFEEALSRLESLTQSMQGEMPLEDALAAYQEGNELVRYCQTKLAQVEQKLQVLDADGTKELNLESDE.

It belongs to the XseB family. As to quaternary structure, heterooligomer composed of large and small subunits.

The protein resides in the cytoplasm. It catalyses the reaction Exonucleolytic cleavage in either 5'- to 3'- or 3'- to 5'-direction to yield nucleoside 5'-phosphates.. In terms of biological role, bidirectionally degrades single-stranded DNA into large acid-insoluble oligonucleotides, which are then degraded further into small acid-soluble oligonucleotides. This chain is Exodeoxyribonuclease 7 small subunit, found in Neisseria gonorrhoeae (strain ATCC 700825 / FA 1090).